Here is a 713-residue protein sequence, read N- to C-terminus: MPLTEEELKLIEETLGRKPNQVELAMFEAQWSEHCSYKSSRKHLRKLKMDSPWVVKGGDAAVVDFGSVYVAFRIESHNHPSAVDPYNGAATGVGGIIRDILSSGAKPIALLDDLIFGDLDENLVKWHVKGVVKGISDYGNRVGVPTVGGETWFDPDFTRNPMVSVACVGVCPKDKLINGTPRPGDLIVIAGNYTGKDGLLGSSFASKNLEEGVEEEYAAIQVPDPLMEKLLIDSILEMRDERLLVFVKDLGGGGLATALSEVAASFGLGVEARLDALHLREPMEAWEIVVSESQERMMLVIRPEDLERAKKVLEKYDVPYSVIGKFTDTGRVVLYYNGEKVADLPAKFLAEGPELDRPYERPKWHLELELLPPLPEVDLGDAIRKVLSSPNVASKRWIYEQYDHEVQIRTVVKPGEGDAAVLRLLEDPPKGIAVATDSNPRYTFLDPLWGAADVFLEAYRNVVASGARPLAAVDQVDAGSPERPDRFWFFVRMIDGLAWVEREVDVPIVGGKVSFYNEDDVTGKQIKPTVMITMIGKVENVYNAKRARAEEGDLLVLVGETFPELGGSEFLWSVHKLVRGKPPVPRPSTEARVAERILKAIKVSGVTGVHDVSVGGLAAAVAELAKGFGATLELDKVKGPWKRPEEALFSESGARYLLAVKPEAAEEVLKVTGGTVVGKVGGGPLRVLLNGKEVASVDDFEDLLENGMTSRLV.

His34 is a catalytic residue. Tyr37 and Arg73 together coordinate ATP. Glu75 provides a ligand contact to Mg(2+). Residues 76–79 (SHNH) and Arg98 contribute to the substrate site. Residue His77 is the Proton acceptor of the active site. Asp99 lines the Mg(2+) pocket. Gln221 is a substrate binding site. A Mg(2+)-binding site is contributed by Asp249. A substrate-binding site is contributed by 292–294 (ESQ). Asp474 and Gly511 together coordinate ATP. Ser514 lines the substrate pocket.

The protein belongs to the FGAMS family. As to quaternary structure, monomer. Part of the FGAM synthase complex composed of 1 PurL, 1 PurQ and 2 PurS subunits.

The protein resides in the cytoplasm. The catalysed reaction is N(2)-formyl-N(1)-(5-phospho-beta-D-ribosyl)glycinamide + L-glutamine + ATP + H2O = 2-formamido-N(1)-(5-O-phospho-beta-D-ribosyl)acetamidine + L-glutamate + ADP + phosphate + H(+). Its pathway is purine metabolism; IMP biosynthesis via de novo pathway; 5-amino-1-(5-phospho-D-ribosyl)imidazole from N(2)-formyl-N(1)-(5-phospho-D-ribosyl)glycinamide: step 1/2. Functionally, part of the phosphoribosylformylglycinamidine synthase complex involved in the purines biosynthetic pathway. Catalyzes the ATP-dependent conversion of formylglycinamide ribonucleotide (FGAR) and glutamine to yield formylglycinamidine ribonucleotide (FGAM) and glutamate. The FGAM synthase complex is composed of three subunits. PurQ produces an ammonia molecule by converting glutamine to glutamate. PurL transfers the ammonia molecule to FGAR to form FGAM in an ATP-dependent manner. PurS interacts with PurQ and PurL and is thought to assist in the transfer of the ammonia molecule from PurQ to PurL. This chain is Phosphoribosylformylglycinamidine synthase subunit PurL, found in Ignicoccus hospitalis (strain KIN4/I / DSM 18386 / JCM 14125).